Here is a 151-residue protein sequence, read N- to C-terminus: Probable cGMP 3',5'-cyclic phosphodiesterase subunit delta (151 aa).

Belongs to the PDE6D/unc-119 family. Interacts with Pde6.

The protein resides in the nucleus. It is found in the cytoplasm. This chain is Probable cGMP 3',5'-cyclic phosphodiesterase subunit delta, found in Aedes aegypti (Yellowfever mosquito).